A 413-amino-acid polypeptide reads, in one-letter code: Putative F-box protein At3g58820 (413 aa).

The F-box domain maps to 1 to 48 (MDGVSSLPNELLCHILSFLTTKEAALTSILSKRWRNLIAFVPNLYIDD).

The sequence is that of Putative F-box protein At3g58820 from Arabidopsis thaliana (Mouse-ear cress).